The primary structure comprises 216 residues: Uracil phosphoribosyltransferase (216 aa).

Residues arginine 85, arginine 110, and 135-143 (DPMVATGYS) contribute to the 5-phospho-alpha-D-ribose 1-diphosphate site. Residues isoleucine 200 and 205–207 (GDA) contribute to the uracil site. Aspartate 206 lines the 5-phospho-alpha-D-ribose 1-diphosphate pocket.

It belongs to the UPRTase family. Requires Mg(2+) as cofactor.

It catalyses the reaction UMP + diphosphate = 5-phospho-alpha-D-ribose 1-diphosphate + uracil. It functions in the pathway pyrimidine metabolism; UMP biosynthesis via salvage pathway; UMP from uracil: step 1/1. Allosterically activated by GTP. Catalyzes the conversion of uracil and 5-phospho-alpha-D-ribose 1-diphosphate (PRPP) to UMP and diphosphate. The sequence is that of Uracil phosphoribosyltransferase from Burkholderia ambifaria (strain MC40-6).